The primary structure comprises 431 residues: Tyrosine--tRNA ligase (431 aa).

Y33 is a binding site for L-tyrosine. The short motif at 38 to 47 is the 'HIGH' region element; that stretch reads PTADSLHIGS. Positions 172 and 176 each coordinate L-tyrosine. The 'KMSKS' region motif lies at 234 to 238; that stretch reads KFGKS. Residue K237 participates in ATP binding. The region spanning 364-431 is the S4 RNA-binding domain; it reads INIVEVLNEK…KKNYFVLNVK (68 aa).

It belongs to the class-I aminoacyl-tRNA synthetase family. TyrS type 1 subfamily. As to quaternary structure, homodimer.

It is found in the cytoplasm. The catalysed reaction is tRNA(Tyr) + L-tyrosine + ATP = L-tyrosyl-tRNA(Tyr) + AMP + diphosphate + H(+). Catalyzes the attachment of tyrosine to tRNA(Tyr) in a two-step reaction: tyrosine is first activated by ATP to form Tyr-AMP and then transferred to the acceptor end of tRNA(Tyr). The sequence is that of Tyrosine--tRNA ligase from Flavobacterium psychrophilum (strain ATCC 49511 / DSM 21280 / CIP 103535 / JIP02/86).